Here is a 392-residue protein sequence, read N- to C-terminus: Chaperone protein DnaJ (392 aa).

In terms of domain architecture, J spans 2–67 (DYYTILGVAK…QKRESYDRYG (66 aa)). A CR-type zinc finger spans residues 149-227 (GVEKELLVSG…CRGQGRIKDK (79 aa)). Residues Cys162, Cys165, Cys179, Cys182, Cys201, Cys204, Cys215, and Cys218 each contribute to the Zn(2+) site. CXXCXGXG motif repeat units lie at residues 162–169 (CDACSGSG), 179–186 (CDRCKGSG), 201–208 (CPDCSGEG), and 215–222 (CSVCRGQG).

This sequence belongs to the DnaJ family. As to quaternary structure, homodimer. The cofactor is Zn(2+).

The protein resides in the cytoplasm. Its function is as follows. Participates actively in the response to hyperosmotic and heat shock by preventing the aggregation of stress-denatured proteins and by disaggregating proteins, also in an autonomous, DnaK-independent fashion. Unfolded proteins bind initially to DnaJ; upon interaction with the DnaJ-bound protein, DnaK hydrolyzes its bound ATP, resulting in the formation of a stable complex. GrpE releases ADP from DnaK; ATP binding to DnaK triggers the release of the substrate protein, thus completing the reaction cycle. Several rounds of ATP-dependent interactions between DnaJ, DnaK and GrpE are required for fully efficient folding. Also involved, together with DnaK and GrpE, in the DNA replication of plasmids through activation of initiation proteins. The sequence is that of Chaperone protein DnaJ from Chlamydia trachomatis serovar L2 (strain ATCC VR-902B / DSM 19102 / 434/Bu).